The sequence spans 562 residues: Phosphoglucomutase-1 (562 aa).

The residue at position 1 (methionine 1) is an N-acetylmethionine. An N6-acetyllysine modification is found at lysine 16. Arginine 23 contributes to the alpha-D-glucose 1,6-bisphosphate binding site. Phosphothreonine is present on threonine 115. Alpha-D-glucose 1,6-bisphosphate is bound at residue serine 117. Serine 117 acts as the Phosphoserine intermediate in catalysis. Position 117 (serine 117) interacts with Mg(2+). A phosphoserine mark is found at serine 117 and serine 134. At threonine 185 the chain carries Phosphothreonine. Phosphoserine is present on serine 213. Residues aspartate 288, aspartate 290, and aspartate 292 each coordinate Mg(2+). Positions 292 and 293 each coordinate alpha-D-glucose 1,6-bisphosphate. An N6-acetyllysine modification is found at lysine 349. Residue tyrosine 353 is modified to Phosphotyrosine. Threonine 357 is an alpha-D-glucose 1,6-bisphosphate binding site. Serine 369 is modified (phosphoserine). Alpha-D-glucose 1,6-bisphosphate-binding residues include glutamate 376, serine 378, and lysine 389. At serine 378 the chain carries Phosphoserine. At lysine 419 the chain carries N6-succinyllysine. Phosphothreonine; by PAK1 is present on threonine 467. 2 positions are modified to phosphoserine: serine 485 and serine 505. Threonine 507 carries the post-translational modification Phosphothreonine. A phosphoserine mark is found at serine 509 and serine 541.

The protein belongs to the phosphohexose mutase family. As to quaternary structure, monomer. Mg(2+) is required as a cofactor. Isoform 2 is the major calmodulin-dependent phosphoprotein in junctional skeletal sarcoplasmic reticulum vesicles. In terms of processing, phosphorylation at Thr-467 by PAK1 significantly enhances enzymatic activity.

The protein resides in the cytoplasm. It is found in the sarcoplasmic reticulum. It catalyses the reaction alpha-D-glucose 1-phosphate = alpha-D-glucose 6-phosphate. The enzyme catalyses O-phospho-L-seryl-[protein] + alpha-D-glucose 1-phosphate = alpha-D-glucose 1,6-bisphosphate + L-seryl-[protein]. The catalysed reaction is alpha-D-glucose 1,6-bisphosphate + L-seryl-[protein] = O-phospho-L-seryl-[protein] + alpha-D-glucose 6-phosphate. Glucose-1,6-bisphosphate enhances phosphorylation of the active site Ser-117, and thereby increases enzyme activity. Its function is as follows. Catalyzes the reversible isomerization of alpha-D-glucose 1-phosphate to alpha-D-glucose 6-phosphate. The mechanism proceeds via the intermediate compound alpha-D-glucose 1,6-bisphosphate. This enzyme participates in both the breakdown and synthesis of glucose. This is Phosphoglucomutase-1 (PGM1) from Oryctolagus cuniculus (Rabbit).